Consider the following 1096-residue polypeptide: Serine-repeat antigen protein 3 (1096 aa).

An N-terminal signal peptide occupies residues 1 to 21; the sequence is MARLSSIVFIICLLLCNNAIS. The tract at residues 28 to 205 is disordered; the sequence is PSSGGTLSGG…RSPPPQVNNI (178 aa). The span at 77–97 shows a compositional bias: low complexity; sequence NSDSTGDSSLGSTGSNGSQPA. The N-linked (GlcNAc...) asparagine glycan is linked to Asn92. The segment covering 102–113 has biased composition (basic and acidic residues); sequence KEPEPTTPKEPE. Positions 123 to 147 are enriched in polar residues; sequence VTPQKTAETASGKQVSPTPSENPPS. The segment covering 149–161 has biased composition (basic and acidic residues); sequence DTPKPESSSEKKV. 8 N-linked (GlcNAc...) asparagine glycosylation sites follow: Asn204, Asn607, Asn637, Asn662, Asn671, Asn712, Asn892, and Asn951. 2 disordered regions span residues 916–952 and 964–1006; these read EAKN…QANS and NQRT…ASAN. Composition is skewed to polar residues over residues 925–952 and 964–975; these read QNYG…QANS and NQRTADSNPNAQ. Residues 976 to 1006 are compositionally biased toward low complexity; that stretch reads STPSPNTTVTDTVNSNTANSNTANSNTASAN. N-linked (GlcNAc...) asparagine glycans are attached at residues Asn981 and Asn1039.

It belongs to the peptidase C1 family. Post-translationally, proteolytically cleaved in both blood and liver stage parasites. Precursor of 130 kDa is processed into 72 kDa and 55 kDa forms. Proteolytically cleaved by SUB1.

It is found in the cell membrane. The protein resides in the parasitophorous vacuole. The protein localises to the secreted. It localises to the host cytoplasm. Its function is as follows. Putative cysteine protease. Probably involved in merozoite release from the parasitophorous vacuole during liver stages. In Plasmodium berghei (strain Anka), this protein is Serine-repeat antigen protein 3.